The sequence spans 729 residues: Fatty acid oxidation complex subunit alpha (729 aa).

Residues 1–189 are enoyl-CoA hydratase/isomerase; the sequence is MLYKGDTLYL…KIGLVDGVVA (189 aa). D296 lines the substrate pocket. Residues 311-729 are 3-hydroxyacyl-CoA dehydrogenase; sequence ETPKHAAVLG…ARPVGALKTA (419 aa). Residues M324, D343, 400–402, K407, and S429 contribute to the NAD(+) site; that span reads VVE. H450 serves as the catalytic For 3-hydroxyacyl-CoA dehydrogenase activity. N453 lines the NAD(+) pocket. N500 and Y660 together coordinate substrate.

This sequence in the N-terminal section; belongs to the enoyl-CoA hydratase/isomerase family. It in the C-terminal section; belongs to the 3-hydroxyacyl-CoA dehydrogenase family. As to quaternary structure, heterotetramer of two alpha chains (FadB) and two beta chains (FadA).

The catalysed reaction is a (3S)-3-hydroxyacyl-CoA + NAD(+) = a 3-oxoacyl-CoA + NADH + H(+). It carries out the reaction a (3S)-3-hydroxyacyl-CoA = a (2E)-enoyl-CoA + H2O. The enzyme catalyses a 4-saturated-(3S)-3-hydroxyacyl-CoA = a (3E)-enoyl-CoA + H2O. It catalyses the reaction (3S)-3-hydroxybutanoyl-CoA = (3R)-3-hydroxybutanoyl-CoA. The catalysed reaction is a (3Z)-enoyl-CoA = a 4-saturated (2E)-enoyl-CoA. It carries out the reaction a (3E)-enoyl-CoA = a 4-saturated (2E)-enoyl-CoA. Its pathway is lipid metabolism; fatty acid beta-oxidation. Involved in the aerobic and anaerobic degradation of long-chain fatty acids via beta-oxidation cycle. Catalyzes the formation of 3-oxoacyl-CoA from enoyl-CoA via L-3-hydroxyacyl-CoA. It can also use D-3-hydroxyacyl-CoA and cis-3-enoyl-CoA as substrate. The protein is Fatty acid oxidation complex subunit alpha of Klebsiella pneumoniae subsp. pneumoniae (strain ATCC 700721 / MGH 78578).